The following is a 562-amino-acid chain: Tissue-type plasminogen activator (562 aa).

An N-terminal signal peptide occupies residues 1 to 19; that stretch reads MYALKRELWCVLLLCGAIC. Positions 20 to 32 are excised as a propeptide; that stretch reads TSPSQETHRRLRR. A propeptide spans 33-35 (removed by plasmin); the sequence is GVR. The region spanning 39-81 is the Fibronectin type-I domain; that stretch reads VTCRDEKTQMIYQQHQSWLRPLLRGNRVEHCWCNDGQTQCHSV. 17 cysteine pairs are disulfide-bonded: Cys41/Cys71, Cys69/Cys78, Cys86/Cys97, Cys91/Cys108, Cys110/Cys119, Cys127/Cys208, Cys148/Cys190, Cys179/Cys203, Cys215/Cys296, Cys236/Cys278, Cys267/Cys291, Cys299/Cys430, Cys342/Cys358, Cys350/Cys419, Cys444/Cys519, Cys476/Cys492, and Cys509/Cys537. The tract at residues 42 to 52 is important for binding to annexin A2; the sequence is RDEKTQMIYQQ. The EGF-like domain occupies 82-120; it reads PVKSCSEPRCFNGGTCLQAIYFSDFVCQCPVGFIGRQCE. An O-linked (Fuc) threonine glycan is attached at Thr96. 2 Kringle domains span residues 126 to 208 and 214 to 296; these read TCYE…TPAC and ECYT…LPQC. N-linked (GlcNAc...) asparagine glycosylation is present at Asn152. A Peptidase S1 domain is found at 311-561; that stretch reads IKGGLYADIT…YLNWIRDNTR (251 aa). Catalysis depends on charge relay system residues His357 and Asp406. The N-linked (GlcNAc...) asparagine glycan is linked to Asn483. The active-site Charge relay system is Ser513.

The protein belongs to the peptidase S1 family. Heterodimer of chain A and chain B held by a disulfide bond. Binds to fibrin with high affinity. This interaction leads to an increase in the catalytic efficiency of the enzyme due to an increase in affinity for plasminogen. Similarly, binding to heparin increases the activation of plasminogen. Binds to annexin A2, cytokeratin-8, fibronectin and laminin. Binds to mannose receptor and the low-density lipoprotein receptor-related protein (LRP1); these proteins are involved in TPA clearance. Binds LRP1B; binding is followed by internalization and degradation. Forms heterodimer with SERPINA5. Interacts with SERPINE1. In complex with SERPINE1, interacts with SORL1. The single chain, almost fully active enzyme, can be further processed into a two-chain fully active form by a cleavage after Arg-310 catalyzed by plasmin, tissue kallikrein or factor Xa.

Its subcellular location is the secreted. It is found in the extracellular space. The catalysed reaction is Specific cleavage of Arg-|-Val bond in plasminogen to form plasmin.. Its activity is regulated as follows. Inhibited by SERPINA5. Inhibited by SERPINE1. Converts the abundant, but inactive, zymogen plasminogen to plasmin by hydrolyzing a single Arg-Val bond in plasminogen. By controlling plasmin-mediated proteolysis, it plays an important role in tissue remodeling and degradation, in cell migration and many other physiopathological events. During oocyte activation, plays a role in cortical granule reaction in the zona reaction, which contributes to the block to polyspermy. This chain is Tissue-type plasminogen activator (PLAT), found in Sus scrofa (Pig).